Consider the following 31-residue polypeptide: Cytochrome b6-f complex subunit 6 (31 aa).

Residues 4–24 (LISYISLLAGFVIIASVFYLA) traverse the membrane as a helical segment.

It belongs to the PetL family. The 4 large subunits of the cytochrome b6-f complex are cytochrome b6, subunit IV (17 kDa polypeptide, PetD), cytochrome f and the Rieske protein, while the 4 small subunits are PetG, PetL, PetM and PetN. The complex functions as a dimer.

It localises to the plastid. The protein resides in the chloroplast thylakoid membrane. Component of the cytochrome b6-f complex, which mediates electron transfer between photosystem II (PSII) and photosystem I (PSI), cyclic electron flow around PSI, and state transitions. PetL is important for photoautotrophic growth as well as for electron transfer efficiency and stability of the cytochrome b6-f complex. This is Cytochrome b6-f complex subunit 6 from Tupiella akineta (Green alga).